Here is a 362-residue protein sequence, read N- to C-terminus: S-adenosylmethionine-dependent nucleotide dehydratase RSAD2 (362 aa).

The segment at Gln-49–Thr-71 is disordered. The span at Glu-56 to His-68 shows a compositional bias: basic and acidic residues. A Radical SAM core domain is found at Pro-70–Leu-290. Residues Cys-84, Cys-88, and Cys-91 each coordinate [4Fe-4S] cluster. Position 198 is an N6-acetyllysine (Lys-198). A Glycyl lysine isopeptide (Lys-Gly) (interchain with G-Cter in ubiquitin) cross-link involves residue Lys-207.

The protein belongs to the radical SAM superfamily. RSAD2 family. In terms of assembly, homodimer. Interacts with IRAK1 and TRAF6. Interacts with FPPS. Interacts with HADHB. Interacts (via C-terminus) with VAPA/VAP33 (via C-terminus). The cofactor is [4Fe-4S] cluster. In terms of processing, acetylated by HAT1. HAT1-mediated acetylation of Lys-198 in turn recruits UBE4A that stimulates RSAD2 polyubiquitination leading to proteasomal degradation. 'Lys-6'-linked polyubiquitination at Lys-207 leads to RSAD2 protein degradation.

It localises to the endoplasmic reticulum membrane. It is found in the golgi apparatus. The protein resides in the endoplasmic reticulum. The protein localises to the lipid droplet. Its subcellular location is the mitochondrion. It localises to the mitochondrion inner membrane. It is found in the mitochondrion outer membrane. The catalysed reaction is CTP + AH2 + S-adenosyl-L-methionine = 3'-deoxy-3',4'-didehydro-CTP + 5'-deoxyadenosine + L-methionine + A + H2O + H(+). Its activity is regulated as follows. IRAK1 and TRAF6 synergistically activate RSAD2 increasing its activity with CTP as substrate about 10-fold. Interferon-inducible antiviral protein which plays a major role in the cell antiviral state induced by type I and type II interferon. Catalyzes the conversion of cytidine triphosphate (CTP) to 3'-deoxy-3',4'-didehydro-CTP (ddhCTP) via a SAM-dependent radical mechanism. In turn, ddhCTP acts as a chain terminator for the RNA-dependent RNA polymerases from multiple viruses and directly inhibits viral replication. Therefore, inhibits a wide range of DNA and RNA viruses. Also promotes TLR7 and TLR9-dependent production of IFN-beta production in plasmacytoid dendritic cells (pDCs) by facilitating 'Lys-63'-linked ubiquitination of IRAK1 by TRAF6. Plays a role in CD4+ T-cells activation and differentiation. Facilitates T-cell receptor (TCR)-mediated GATA3 activation and optimal T-helper 2 (Th2) cytokine production by modulating NFKB1 and JUNB activities. Can inhibit secretion of soluble proteins. The sequence is that of S-adenosylmethionine-dependent nucleotide dehydratase RSAD2 from Sus scrofa (Pig).